A 688-amino-acid chain; its full sequence is MAKIRVYELAKELNISSKELITLLEEEFSVEVKNHMSAIEDEDANLIKELLSGKEKSEKTKEEDDEIETTAKNPIKESMNNKKSNKRDDKNEKVNTENAEDMGIITMTSDTITVKEISDKLEKSYAEVIKELMLMGVMASVNQEINFEMAEKLAAKFDMEILKEDEDEKEDLEDILKDNEEEEYLQKRSPIITVMGHVDHGKTSLLDAIRKSKVTSTEAGGITQHIGAYTVELNGEAITFLDTPGHAAFTAMRARGAQVTDIVILVVAADDGIMPQTQEAISHCKAANVPLIVAINKIDRPGANIDKVKQELTEYGLVAEDWGGDTICVPVSAHTKEGIDDLLEMILLSSEILELKANPNRKAKGTVVEAKLDKGRGPVATLLIQNGTLRVGDSIVVGSTYGRIRAMFNDKGRNIESAGPSTPVEILGLSEVPEAGDKFYQVKEEKTARGIADKRKEKIRDEYLQSTHKVSLEDLYNQIQEGTVKELGLIVKADVQGSVEALKQSLEKLSTEEVKVRVIHGGVGAINETDVTLATASNGIILGFNVRPDNNAIIASERDGVDIKTYRVIYDAIEDIKSAMLGMLEPEFKEVVIGTAEVRQVYKISSVGTIAGAYIQTGKLARNAGARVIRDGIVIFESELASLKRFKDDAKEVAQGYECGLSIEKFNDIKEGDIIECFIMEEIKKKTL.

Composition is skewed to basic and acidic residues over residues 53 to 62 and 86 to 95; these read GKEKSEKTKE and KRDDKNEKVN. Positions 53–100 are disordered; that stretch reads GKEKSEKTKEEDDEIETTAKNPIKESMNNKKSNKRDDKNEKVNTENAE. One can recognise a tr-type G domain in the interval 187–354; the sequence is KRSPIITVMG…MILLSSEILE (168 aa). The G1 stretch occupies residues 196 to 203; it reads GHVDHGKT. 196–203 provides a ligand contact to GTP; it reads GHVDHGKT. A G2 region spans residues 221–225; that stretch reads GITQH. A G3 region spans residues 242 to 245; that stretch reads DTPG. GTP is bound by residues 242 to 246 and 296 to 299; these read DTPGH and NKID. The tract at residues 296–299 is G4; the sequence is NKID. The segment at 332-334 is G5; the sequence is SAH.

It belongs to the TRAFAC class translation factor GTPase superfamily. Classic translation factor GTPase family. IF-2 subfamily.

Its subcellular location is the cytoplasm. Functionally, one of the essential components for the initiation of protein synthesis. Protects formylmethionyl-tRNA from spontaneous hydrolysis and promotes its binding to the 30S ribosomal subunits. Also involved in the hydrolysis of GTP during the formation of the 70S ribosomal complex. This is Translation initiation factor IF-2 from Clostridium botulinum (strain ATCC 19397 / Type A).